A 335-amino-acid chain; its full sequence is NADH-quinone oxidoreductase subunit H (335 aa).

Helical transmembrane passes span 11–31 (VILT…CGAL), 81–101 (VIFT…FVVI), 114–134 (IGLL…LFAG), 154–174 (VSYE…VGSF), 187–207 (LWFI…GVAV), 238–258 (FFVG…TLFF), 270–290 (QLSF…FILL), and 307–327 (WKFC…IVLY).

It belongs to the complex I subunit 1 family. In terms of assembly, NDH-1 is composed of 13 different subunits. Subunits NuoA, H, J, K, L, M, N constitute the membrane sector of the complex.

Its subcellular location is the cell inner membrane. It catalyses the reaction a quinone + NADH + 5 H(+)(in) = a quinol + NAD(+) + 4 H(+)(out). Functionally, NDH-1 shuttles electrons from NADH, via FMN and iron-sulfur (Fe-S) centers, to quinones in the respiratory chain. The immediate electron acceptor for the enzyme in this species is believed to be ubiquinone. Couples the redox reaction to proton translocation (for every two electrons transferred, four hydrogen ions are translocated across the cytoplasmic membrane), and thus conserves the redox energy in a proton gradient. This subunit may bind ubiquinone. This Pseudomonas putida (strain ATCC 700007 / DSM 6899 / JCM 31910 / BCRC 17059 / LMG 24140 / F1) protein is NADH-quinone oxidoreductase subunit H.